The sequence spans 455 residues: ADP-dependent glucose/glucosamine kinase (455 aa).

In terms of domain architecture, ADPK spans 2-455 (PTWEELYKNA…AFIGEFSFTL (454 aa)). D-glucose contacts are provided by residues D34, E88, 112–113 (GQ), and H176. E195 provides a ligand contact to ADP. E266 provides a ligand contact to Mg(2+). N292 is an ADP binding site. A Mg(2+)-binding site is contributed by E295. ADP is bound by residues 342-343 (HT), V429, and G439. Residue D440 coordinates D-glucose. Position 440 (D440) interacts with Mg(2+). The Proton acceptor role is filled by D440.

Belongs to the ADP-dependent glucokinase family. In terms of assembly, homodimer. It depends on Mg(2+) as a cofactor.

Its subcellular location is the cytoplasm. It carries out the reaction D-glucose + ADP = D-glucose 6-phosphate + AMP + H(+). The catalysed reaction is D-glucosamine + ADP = D-glucosamine 6-phosphate + AMP + H(+). The protein operates within carbohydrate degradation; glycolysis. Functionally, catalyzes the ADP-dependent phosphorylation of D-glucose to D-glucose 6-phosphate and glucosamine to glucosamine 6-phosphate. Can also use CDP as the phosphoryl group donor and D-1,5-anhydroglucitol as the phosphoryl group acceptor. This Pyrococcus furiosus (strain ATCC 43587 / DSM 3638 / JCM 8422 / Vc1) protein is ADP-dependent glucose/glucosamine kinase.